The primary structure comprises 151 residues: FUN14 domain-containing protein 1A (151 aa).

The YXXL signature appears at 14 to 17 (YEVL). 3 helical membrane-spanning segments follow: residues 44-64 (YSVA…GFLF), 71-91 (AATA…GGYI), and 130-150 (FVKK…LGLA).

This sequence belongs to the FUN14 family.

The protein resides in the mitochondrion outer membrane. Acts as an activator of hypoxia-induced mitophagy, an important mechanism for mitochondrial quality control. The chain is FUN14 domain-containing protein 1A (fundc1-a) from Xenopus laevis (African clawed frog).